The primary structure comprises 194 residues: Leucyl/phenylalanyl-tRNA--protein transferase (194 aa).

Belongs to the L/F-transferase family.

The protein localises to the cytoplasm. The catalysed reaction is N-terminal L-lysyl-[protein] + L-leucyl-tRNA(Leu) = N-terminal L-leucyl-L-lysyl-[protein] + tRNA(Leu) + H(+). The enzyme catalyses N-terminal L-arginyl-[protein] + L-leucyl-tRNA(Leu) = N-terminal L-leucyl-L-arginyl-[protein] + tRNA(Leu) + H(+). It catalyses the reaction L-phenylalanyl-tRNA(Phe) + an N-terminal L-alpha-aminoacyl-[protein] = an N-terminal L-phenylalanyl-L-alpha-aminoacyl-[protein] + tRNA(Phe). Functionally, functions in the N-end rule pathway of protein degradation where it conjugates Leu, Phe and, less efficiently, Met from aminoacyl-tRNAs to the N-termini of proteins containing an N-terminal arginine or lysine. The sequence is that of Leucyl/phenylalanyl-tRNA--protein transferase from Chlorobium phaeobacteroides (strain DSM 266 / SMG 266 / 2430).